The chain runs to 336 residues: NADH-quinone oxidoreductase subunit H (336 aa).

8 helical membrane passes run 4–24, 75–95, 108–128, 154–174, 181–201, 233–253, 272–292, and 308–328; these read YILW…LVVA, YLFF…WAVI, LGLL…VIAG, MGFA…TGII, IWHW…IAGI, LFFL…SIMF, FVPG…MFLW, and LGWK…ACMV.

The protein belongs to the complex I subunit 1 family. In terms of assembly, NDH-1 is composed of 14 different subunits. Subunits NuoA, H, J, K, L, M, N constitute the membrane sector of the complex.

Its subcellular location is the cell inner membrane. The catalysed reaction is a quinone + NADH + 5 H(+)(in) = a quinol + NAD(+) + 4 H(+)(out). Functionally, NDH-1 shuttles electrons from NADH, via FMN and iron-sulfur (Fe-S) centers, to quinones in the respiratory chain. The immediate electron acceptor for the enzyme in this species is believed to be ubiquinone. Couples the redox reaction to proton translocation (for every two electrons transferred, four hydrogen ions are translocated across the cytoplasmic membrane), and thus conserves the redox energy in a proton gradient. This subunit may bind ubiquinone. In Francisella tularensis subsp. mediasiatica (strain FSC147), this protein is NADH-quinone oxidoreductase subunit H.